A 560-amino-acid polypeptide reads, in one-letter code: Membrane protein insertase YidC (560 aa).

Residues 1–21 (MDIKRTILIAALAVVSYVMVL) form a helical membrane-spanning segment. The interval 42–66 (VAPGLPDGVPAGNNGASADVPSANA) is disordered. 5 consecutive transmembrane segments (helical) span residues 341–361 (LELTVDYGFLWFIAQPIFWLL), 367–387 (LLGNWGWSIIVLTMLIKGLFF), 437–457 (LGGCLPILVQMPVFLALYWVL), 468–488 (WILWITDLSIKDPFFILPIIM), and 515–535 (PIIFTFFFLWFPAGLVLYWVV).

Belongs to the OXA1/ALB3/YidC family. Type 1 subfamily. As to quaternary structure, interacts with the Sec translocase complex via SecD. Specifically interacts with transmembrane segments of nascent integral membrane proteins during membrane integration.

The protein localises to the cell inner membrane. Functionally, required for the insertion and/or proper folding and/or complex formation of integral membrane proteins into the membrane. Involved in integration of membrane proteins that insert both dependently and independently of the Sec translocase complex, as well as at least some lipoproteins. Aids folding of multispanning membrane proteins. This chain is Membrane protein insertase YidC, found in Pseudomonas putida (strain ATCC 700007 / DSM 6899 / JCM 31910 / BCRC 17059 / LMG 24140 / F1).